The chain runs to 249 residues: Nicotinamide/nicotinic acid mononucleotide adenylyltransferase (249 aa).

2 residues coordinate NAD(+): Ser-34 and Phe-35. Residues His-42 and Lys-75 each coordinate ATP. Thr-112, Gly-141, Asp-143, Trp-154, Arg-173, and Asn-204 together coordinate NAD(+). 209–210 is a binding site for ATP; the sequence is SR.

It belongs to the eukaryotic NMN adenylyltransferase family. Requires a divalent metal cation as cofactor.

The catalysed reaction is beta-nicotinamide D-ribonucleotide + ATP + H(+) = diphosphate + NAD(+). It carries out the reaction nicotinate beta-D-ribonucleotide + ATP + H(+) = deamido-NAD(+) + diphosphate. It participates in cofactor biosynthesis; NAD(+) biosynthesis; deamido-NAD(+) from nicotinate D-ribonucleotide: step 1/1. It functions in the pathway cofactor biosynthesis; NAD(+) biosynthesis; NAD(+) from nicotinamide D-ribonucleotide: step 1/1. In terms of biological role, catalyzes the formation of NAD(+) from nicotinamide mononucleotide (NMN) and ATP. Can also use the deamidated form; nicotinic acid mononucleotide (NaMN) as substrate. The chain is Nicotinamide/nicotinic acid mononucleotide adenylyltransferase from Oryza sativa subsp. japonica (Rice).